We begin with the raw amino-acid sequence, 60 residues long: UPF0434 protein ESA_02427 (60 aa).

Belongs to the UPF0434 family.

The sequence is that of UPF0434 protein ESA_02427 from Cronobacter sakazakii (strain ATCC BAA-894) (Enterobacter sakazakii).